The following is a 216-amino-acid chain: Probable transaldolase (216 aa).

The active-site Schiff-base intermediate with substrate is the Lys83.

Belongs to the transaldolase family. Type 3B subfamily.

It localises to the cytoplasm. It catalyses the reaction D-sedoheptulose 7-phosphate + D-glyceraldehyde 3-phosphate = D-erythrose 4-phosphate + beta-D-fructose 6-phosphate. Its pathway is carbohydrate degradation; pentose phosphate pathway; D-glyceraldehyde 3-phosphate and beta-D-fructose 6-phosphate from D-ribose 5-phosphate and D-xylulose 5-phosphate (non-oxidative stage): step 2/3. Its function is as follows. Transaldolase is important for the balance of metabolites in the pentose-phosphate pathway. This chain is Probable transaldolase, found in Sphingopyxis alaskensis (strain DSM 13593 / LMG 18877 / RB2256) (Sphingomonas alaskensis).